The chain runs to 393 residues: Nucleosome assembly protein 1-like 1-B (393 aa).

A compositionally biased stretch (basic and acidic residues) spans 1–10 (MANIDNKEQT). The tract at residues 1 to 38 (MANIDNKEQTELDQQDMEDVEDVEEEETGEEANSKARQ) is disordered. Over residues 11-30 (ELDQQDMEDVEDVEEEETGE) the composition is skewed to acidic residues. The NAP1L motif motif lies at 126 to 151 (YEPTEEECEWKVDEEEDIAEDLKEKA). Positions 274–280 (IKKKQKH) match the Nuclear localization signal motif. The span at 347–377 (AIEDDDDDYDEEGEEADDEEGEEEADEDHDP) shows a compositional bias: acidic residues. The interval 347 to 393 (AIEDDDDDYDEEGEEADDEEGEEEADEDHDPDFDPKKAQNPAECKQQ) is disordered.

Belongs to the nucleosome assembly protein (NAP) family. As to quaternary structure, forms homomultimers. Interacts with histone b4. Interacts with the B-type cyclins ccnb1 and ccnb2. In terms of processing, phosphorylated by cyclin B-cdc2 kinase complexes.

It localises to the cytoplasm. The protein localises to the nucleus. Its function is as follows. Acts as a chaperone for the linker histone to facilitate deposition of histone B4 onto linker DNA. Required for both remodeling of sperm chromatin into nucleosomes, and linker histone binding to nucleosome core dimers. Plays a role in tissue-specific gene regulation. Required for primitive hemopoiesis, acting upstream of tal1/scl. This Xenopus laevis (African clawed frog) protein is Nucleosome assembly protein 1-like 1-B (nap1l1-b).